The chain runs to 104 residues: Replication restart protein PriB (104 aa).

Residues 1 to 101 (MTNRLELSGV…LHADHIEIIC (101 aa)) form the SSB domain.

Belongs to the PriB family. As to quaternary structure, homodimer. Interacts with PriA and DnaT. Component of the replication restart primosome. Primosome assembly occurs via a 'hand-off' mechanism. PriA binds to replication forks, subsequently PriB then DnaT bind; DnaT then displaces ssDNA to generate the helicase loading substrate.

Functionally, involved in the restart of stalled replication forks, which reloads the replicative helicase on sites other than the origin of replication; the PriA-PriB pathway is the major replication restart pathway. During primosome assembly it facilitates complex formation between PriA and DnaT on DNA; stabilizes PriA on DNA. Stimulates the DNA unwinding activity of PriA helicase. This chain is Replication restart protein PriB, found in Photobacterium profundum (strain SS9).